Here is a 172-residue protein sequence, read N- to C-terminus: 16S rRNA aminocarboxypropyltransferase (172 aa).

S-adenosyl-L-methionine-binding residues include Thr-21, Leu-71, Leu-93, and Thr-112.

This sequence belongs to the TDD superfamily. TSR3 family.

The protein resides in the cytoplasm. It carries out the reaction an N(1)-methylpseudouridine in rRNA + S-adenosyl-L-methionine = N(1)-methyl-N(3)-[(3S)-3-amino-3-carboxypropyl]pseudouridine in rRNA + S-methyl-5'-thioadenosine + H(+). Its function is as follows. Aminocarboxypropyltransferase that catalyzes the aminocarboxypropyl transfer on pseudouridine at position 914 in 16S rRNA. It constitutes the last step in biosynthesis of the hypermodified N1-methyl-N3-(3-amino-3-carboxypropyl) pseudouridine (m1acp3-Psi). This chain is 16S rRNA aminocarboxypropyltransferase, found in Methanocaldococcus jannaschii (strain ATCC 43067 / DSM 2661 / JAL-1 / JCM 10045 / NBRC 100440) (Methanococcus jannaschii).